We begin with the raw amino-acid sequence, 507 residues long: uncharacterized protein (507 aa).

12 helical membrane-spanning segments follow: residues 46–66, 83–103, 112–132, 141–161, 181–201, 207–227, 263–283, 299–319, 328–348, 354–374, 389–409, and 442–462; these read WIVL…WIGY, AWLS…AMWA, AVLI…ISSL, FPIC…IMFL, IGVM…PAIV, VIWL…IATF, IILL…YTVM, VCAA…SIFV, TLKI…QLTL, VILG…YPIG, TSTG…VFIM, and MSIM…VVLF. Basic and acidic residues predominate over residues 477-493; the sequence is ATADKAKELSNQNKDRI. Residues 477-507 are disordered; that stretch reads ATADKAKELSNQNKDRITLQAESAVEPLQKK.

The protein localises to the membrane. This is an uncharacterized protein from Caenorhabditis elegans.